Reading from the N-terminus, the 47-residue chain is Large ribosomal subunit protein bL33A (47 aa).

This sequence belongs to the bacterial ribosomal protein bL33 family.

The sequence is that of Large ribosomal subunit protein bL33A from Staphylococcus aureus (strain JH1).